A 565-amino-acid chain; its full sequence is Phospholipase B-like protein C (565 aa).

The N-terminal stretch at 1–21 (MNKIIILISLFLNFLFGYVVC) is a signal peptide. 10 N-linked (GlcNAc...) asparagine glycosylation sites follow: asparagine 53, asparagine 84, asparagine 118, asparagine 200, asparagine 201, asparagine 211, asparagine 266, asparagine 302, asparagine 406, and asparagine 485.

This sequence belongs to the phospholipase B-like family.

The protein localises to the secreted. Its function is as follows. Probable phospholipase. The sequence is that of Phospholipase B-like protein C (plbC) from Dictyostelium discoideum (Social amoeba).